A 101-amino-acid polypeptide reads, in one-letter code: Urease subunit beta (101 aa).

The protein belongs to the urease beta subunit family. Heterotrimer of UreA (gamma), UreB (beta) and UreC (alpha) subunits. Three heterotrimers associate to form the active enzyme.

The protein localises to the cytoplasm. It carries out the reaction urea + 2 H2O + H(+) = hydrogencarbonate + 2 NH4(+). It functions in the pathway nitrogen metabolism; urea degradation; CO(2) and NH(3) from urea (urease route): step 1/1. In Rhodopseudomonas palustris (strain HaA2), this protein is Urease subunit beta.